A 182-amino-acid chain; its full sequence is MSKQHTAQAPVDPIVLGKMGSSYGIRGWLRVFSSTEDAESIFDYQPWLIQKAGQWQVVELESWRHHNQDIIIKLKGVDDRDAANLLTNCEIIVDSSQLPELEEGDYYWKDLMGCQVVTTEGYSLGKVIDMMETGSNDVLVIKANLKDAFGIKERLVPFLDGQVIKKVDLTTRTIEVDWDPGF.

The PRC barrel domain occupies 103 to 182; sequence EGDYYWKDLM…TIEVDWDPGF (80 aa).

It belongs to the RimM family. Binds ribosomal protein uS19.

It is found in the cytoplasm. Its function is as follows. An accessory protein needed during the final step in the assembly of 30S ribosomal subunit, possibly for assembly of the head region. Essential for efficient processing of 16S rRNA. May be needed both before and after RbfA during the maturation of 16S rRNA. It has affinity for free ribosomal 30S subunits but not for 70S ribosomes. The sequence is that of Ribosome maturation factor RimM from Klebsiella pneumoniae subsp. pneumoniae (strain ATCC 700721 / MGH 78578).